Consider the following 130-residue polypeptide: Large ribosomal subunit protein bL31c (130 aa).

The N-terminal 36 residues, 1-36, are a transit peptide targeting the chloroplast; that stretch reads MVLTLSNQFLAKIPATPKTLTLPKTSSSTLRPQWSC.

This sequence belongs to the bacterial ribosomal protein bL31 family. Type A subfamily. As to quaternary structure, component of the chloroplast large ribosomal subunit (LSU). Mature 70S chloroplast ribosomes of higher plants consist of a small (30S) and a large (50S) subunit. The 30S small subunit contains 1 molecule of ribosomal RNA (16S rRNA) and 24 different proteins. The 50S large subunit contains 3 rRNA molecules (23S, 5S and 4.5S rRNA) and 33 different proteins.

The protein resides in the plastid. It is found in the chloroplast. In terms of biological role, component of the chloroplast ribosome (chloro-ribosome), a dedicated translation machinery responsible for the synthesis of chloroplast genome-encoded proteins, including proteins of the transcription and translation machinery and components of the photosynthetic apparatus. The protein is Large ribosomal subunit protein bL31c (RPL31) of Spinacia oleracea (Spinach).